Reading from the N-terminus, the 783-residue chain is Probable phosphoketolase (783 aa).

It belongs to the XFP family. Requires thiamine diphosphate as cofactor.

This chain is Probable phosphoketolase, found in Rhodopseudomonas palustris (strain TIE-1).